Here is a 272-residue protein sequence, read N- to C-terminus: Putative phosphoenolpyruvate synthase regulatory protein (272 aa).

152 to 159 (GVSRCGKT) lines the ADP pocket.

Belongs to the pyruvate, phosphate/water dikinase regulatory protein family. PSRP subfamily.

It carries out the reaction [pyruvate, water dikinase] + ADP = [pyruvate, water dikinase]-phosphate + AMP + H(+). The catalysed reaction is [pyruvate, water dikinase]-phosphate + phosphate + H(+) = [pyruvate, water dikinase] + diphosphate. Its function is as follows. Bifunctional serine/threonine kinase and phosphorylase involved in the regulation of the phosphoenolpyruvate synthase (PEPS) by catalyzing its phosphorylation/dephosphorylation. This is Putative phosphoenolpyruvate synthase regulatory protein from Pseudomonas fluorescens (strain ATCC BAA-477 / NRRL B-23932 / Pf-5).